The primary structure comprises 333 residues: Glycerol-3-phosphate dehydrogenase [NAD(P)+] (333 aa).

Positions 10, 11, 31, 32, and 105 each coordinate NADPH. K105, G136, and S138 together coordinate sn-glycerol 3-phosphate. NADPH is bound at residue A140. K191, D244, S254, R255, and N256 together coordinate sn-glycerol 3-phosphate. The Proton acceptor role is filled by K191. R255 contributes to the NADPH binding site. 2 residues coordinate NADPH: I279 and E281.

Belongs to the NAD-dependent glycerol-3-phosphate dehydrogenase family.

Its subcellular location is the cytoplasm. The catalysed reaction is sn-glycerol 3-phosphate + NAD(+) = dihydroxyacetone phosphate + NADH + H(+). It catalyses the reaction sn-glycerol 3-phosphate + NADP(+) = dihydroxyacetone phosphate + NADPH + H(+). It participates in membrane lipid metabolism; glycerophospholipid metabolism. Its function is as follows. Catalyzes the reduction of the glycolytic intermediate dihydroxyacetone phosphate (DHAP) to sn-glycerol 3-phosphate (G3P), the key precursor for phospholipid synthesis. The protein is Glycerol-3-phosphate dehydrogenase [NAD(P)+] of Chlorobium luteolum (strain DSM 273 / BCRC 81028 / 2530) (Pelodictyon luteolum).